The following is a 323-amino-acid chain: Aldo-keto reductase family 1 member C3 (323 aa).

NADP(+) contacts are provided by residues 23–24 and D50; that span reads TY. Y55 (proton donor) is an active-site residue. Substrate is bound at residue H117. NADP(+) contacts are provided by residues 166-167, Q190, 216-222, 270-272, and 276-280; these read SN, YSALGSQ, KSY, and RIRQN.

The protein belongs to the aldo/keto reductase family. As to expression, expressed in many tissues including adrenal gland, brain, kidney, liver, lung, mammary gland, placenta, small intestine, colon, spleen, prostate and testis. High expression in prostate and mammary gland. In the prostate, higher levels in epithelial cells than in stromal cells. In the brain, expressed in medulla, spinal cord, frontotemporal lobes, thalamus, subthalamic nuclei and amygdala. Weaker expression in the hippocampus, substantia nigra and caudate.

It localises to the cytoplasm. The catalysed reaction is a 3alpha-hydroxysteroid + NADP(+) = a 3-oxosteroid + NADPH + H(+). It carries out the reaction a 3alpha-hydroxysteroid + NAD(+) = a 3-oxosteroid + NADH + H(+). It catalyses the reaction prostaglandin F2alpha + NADP(+) = prostaglandin D2 + NADPH + H(+). The enzyme catalyses prostaglandin F2alpha + NADP(+) = prostaglandin H2 + NADPH + H(+). The catalysed reaction is prostaglandin D2 + NADPH + H(+) = 11beta-prostaglandin F2 + NADP(+). It carries out the reaction prostaglandin D2-ethanolamide + NADPH + H(+) = 11beta-prostaglandin F2-ethanolamide + NADP(+). It catalyses the reaction testosterone + NAD(+) = androst-4-ene-3,17-dione + NADH + H(+). The enzyme catalyses testosterone + NADP(+) = androst-4-ene-3,17-dione + NADPH + H(+). The catalysed reaction is 17beta-estradiol + NADP(+) = estrone + NADPH + H(+). It carries out the reaction 17beta-estradiol + NAD(+) = estrone + NADH + H(+). It catalyses the reaction (20S)-hydroxypregn-4-en-3-one + NADP(+) = progesterone + NADPH + H(+). The enzyme catalyses (20S)-hydroxypregn-4-en-3-one + NAD(+) = progesterone + NADH + H(+). The catalysed reaction is 5alpha-androstane-3alpha,17beta-diol + NADP(+) = 17beta-hydroxy-5alpha-androstan-3-one + NADPH + H(+). It carries out the reaction 5alpha-androstane-3alpha,17beta-diol + NAD(+) = 17beta-hydroxy-5alpha-androstan-3-one + NADH + H(+). It catalyses the reaction androsterone + NADPH + H(+) = 5alpha-androstane-3alpha,17beta-diol + NADP(+). The enzyme catalyses 5alpha-androstane-3alpha,17beta-diol + NAD(+) = androsterone + NADH + H(+). The catalysed reaction is 5alpha-androstane-3beta,17beta-diol + NADP(+) = 17beta-hydroxy-5alpha-androstan-3-one + NADPH + H(+). It carries out the reaction 9-cis-retinol + NADP(+) = 9-cis-retinal + NADPH + H(+). It functions in the pathway steroid metabolism. Its activity is regulated as follows. Strongly inhibited by nonsteroidal anti-inflammatory drugs (NSAID) including flufenamic acid and indomethacin. Also inhibited by the flavinoid, rutin, and by selective serotonin inhibitors (SSRIs). The oxidation reaction is inhibited by low micromolar concentrations of NADPH. Functionally, cytosolic aldo-keto reductase that catalyzes the NADH and NADPH-dependent reduction of ketosteroids to hydroxysteroids. Acts as a NAD(P)(H)-dependent 3-, 17- and 20-ketosteroid reductase on the steroid nucleus and side chain and regulates the metabolism of androgens, estrogens and progesterone. Displays the ability to catalyze both oxidation and reduction in vitro, but most probably acts as a reductase in vivo since the oxidase activity measured in vitro is inhibited by physiological concentration of NADPH. Acts preferentially as a 17-ketosteroid reductase and has the highest catalytic efficiency of the AKR1C enzyme for the reduction of delta4-androstenedione to form testosterone. Reduces prostaglandin (PG) D2 to 11beta-prostaglandin F2, progesterone to 20alpha-hydroxyprogesterone and estrone to 17beta-estradiol. Catalyzes the transformation of the potent androgen dihydrotestosterone (DHT) into the less active form, 5-alpha-androstan-3-alpha,17-beta-diol (3-alpha-diol). Also displays retinaldehyde reductase activity toward 9-cis-retinal. The polypeptide is Aldo-keto reductase family 1 member C3 (AKR1C3) (Homo sapiens (Human)).